We begin with the raw amino-acid sequence, 234 residues long: Ribonuclease HII (234 aa).

In terms of domain architecture, RNase H type-2 spans 30-221 (GPVAGVDEAG…VRNAAMGSSL (192 aa)). The a divalent metal cation site is built by aspartate 36, glutamate 37, and aspartate 130.

The protein belongs to the RNase HII family. Mn(2+) serves as cofactor. Mg(2+) is required as a cofactor.

It is found in the cytoplasm. It catalyses the reaction Endonucleolytic cleavage to 5'-phosphomonoester.. Endonuclease that specifically degrades the RNA of RNA-DNA hybrids. The polypeptide is Ribonuclease HII (Mycobacteroides abscessus (strain ATCC 19977 / DSM 44196 / CCUG 20993 / CIP 104536 / JCM 13569 / NCTC 13031 / TMC 1543 / L948) (Mycobacterium abscessus)).